We begin with the raw amino-acid sequence, 549 residues long: Chaperonin GroEL (549 aa).

Residues 30-33 (TLGP), K51, 87-91 (DGTTT), G415, 479-481 (NAA), and D495 contribute to the ATP site.

This sequence belongs to the chaperonin (HSP60) family. As to quaternary structure, forms a cylinder of 14 subunits composed of two heptameric rings stacked back-to-back. Interacts with the co-chaperonin GroES.

Its subcellular location is the cytoplasm. The catalysed reaction is ATP + H2O + a folded polypeptide = ADP + phosphate + an unfolded polypeptide.. Its function is as follows. Together with its co-chaperonin GroES, plays an essential role in assisting protein folding. The GroEL-GroES system forms a nano-cage that allows encapsulation of the non-native substrate proteins and provides a physical environment optimized to promote and accelerate protein folding. This Stenotrophomonas maltophilia (strain R551-3) protein is Chaperonin GroEL.